The sequence spans 338 residues: Ketol-acid reductoisomerase (NADP(+)) (338 aa).

Positions 1–181 (MKVYYDKDCD…GGGRTGIIET (181 aa)) constitute a KARI N-terminal Rossmann domain. NADP(+)-binding positions include 24–27 (YGSQ), arginine 47, serine 50, serine 52, and 82–85 (DEFQ). Residue histidine 107 is part of the active site. Residue glycine 133 coordinates NADP(+). Residues 182–327 (TFKDETETDL…EKLRTMMPWI (146 aa)) enclose the KARI C-terminal knotted domain. The Mg(2+) site is built by aspartate 190, glutamate 194, glutamate 226, and glutamate 230. Serine 251 is a substrate binding site.

The protein belongs to the ketol-acid reductoisomerase family. Requires Mg(2+) as cofactor.

The catalysed reaction is (2R)-2,3-dihydroxy-3-methylbutanoate + NADP(+) = (2S)-2-acetolactate + NADPH + H(+). The enzyme catalyses (2R,3R)-2,3-dihydroxy-3-methylpentanoate + NADP(+) = (S)-2-ethyl-2-hydroxy-3-oxobutanoate + NADPH + H(+). It participates in amino-acid biosynthesis; L-isoleucine biosynthesis; L-isoleucine from 2-oxobutanoate: step 2/4. The protein operates within amino-acid biosynthesis; L-valine biosynthesis; L-valine from pyruvate: step 2/4. Involved in the biosynthesis of branched-chain amino acids (BCAA). Catalyzes an alkyl-migration followed by a ketol-acid reduction of (S)-2-acetolactate (S2AL) to yield (R)-2,3-dihydroxy-isovalerate. In the isomerase reaction, S2AL is rearranged via a Mg-dependent methyl migration to produce 3-hydroxy-3-methyl-2-ketobutyrate (HMKB). In the reductase reaction, this 2-ketoacid undergoes a metal-dependent reduction by NADPH to yield (R)-2,3-dihydroxy-isovalerate. The polypeptide is Ketol-acid reductoisomerase (NADP(+)) (Azotobacter vinelandii (strain DJ / ATCC BAA-1303)).